Consider the following 401-residue polypeptide: Chalcone synthase 6 (401 aa).

Residue Cys168 is part of the active site.

Belongs to the thiolase-like superfamily. Chalcone/stilbene synthases family.

It catalyses the reaction (E)-4-coumaroyl-CoA + 3 malonyl-CoA + 3 H(+) = 2',4,4',6'-tetrahydroxychalcone + 3 CO2 + 4 CoA. It participates in secondary metabolite biosynthesis; flavonoid biosynthesis. In terms of biological role, the primary product of this enzyme is 4,2',4',6'-tetrahydroxychalcone (also termed naringenin-chalcone or chalcone) which can under specific conditions spontaneously isomerize into naringenin. The sequence is that of Chalcone synthase 6 (CHS6) from Sorghum bicolor (Sorghum).